Consider the following 655-residue polypeptide: p-hydroxybenzoic acid efflux pump subunit AaeB (655 aa).

The Periplasmic segment spans residues 1-12 (MDIFSIANQHIR). A helical transmembrane segment spans residues 13–33 (FAVKLATAIVLALFVGFHFQL). The Cytoplasmic portion of the chain corresponds to 34-37 (ETPR). A helical transmembrane segment spans residues 38-58 (WAVLTAAIVAAGPAFAAGGEP). The Periplasmic segment spans residues 59–68 (YSGAIRYRGF). Residues 69–89 (LRIIGTFIGCIAGLVIIIAMI) traverse the membrane as a helical segment. The Cytoplasmic segment spans residues 90-92 (RAP). The chain crosses the membrane as a helical span at residues 93 to 113 (LLMILVCCIWAGFCTWISSLV). The Periplasmic portion of the chain corresponds to 114 to 120 (RIENSYA). A helical transmembrane segment spans residues 121-141 (WGLAGYTALIIVITIQPEPLL). Topologically, residues 142–151 (TPQFAVERCS) are cytoplasmic. A helical transmembrane segment spans residues 152 to 172 (EIVIGIVCAIMADLLFSPRSI). Topologically, residues 173 to 369 (KQEVDRELES…RTTLSCILGT (197 aa)) are periplasmic. Residues 370 to 390 (LFWLWTGWTSGSGAMVMIAVV) form a helical membrane-spanning segment. The Cytoplasmic segment spans residues 391–406 (TSLAMRLPNPRMVAID). Residues 407 to 427 (FIYGTLAALPLGLLYFLVIIP) traverse the membrane as a helical segment. The Periplasmic segment spans residues 428-430 (NTQ). Residues 431-451 (QSMLLLCISLAVLGFFLGIEV) form a helical membrane-spanning segment. Over 452–458 (QKRRLGS) the chain is Cytoplasmic. Residues 459-479 (MGALASTINIIVLDNPMTFHF) traverse the membrane as a helical segment. Residues 480-481 (SQ) are Periplasmic-facing. The helical transmembrane segment at 482–502 (FLDSALGQIVGCVLAFTVILL) threads the bilayer. Residues 503–655 (VRDKSRDRTG…HKYQHALTDS (153 aa)) lie on the Cytoplasmic side of the membrane.

This sequence belongs to the aromatic acid exporter ArAE (TC 2.A.85) family.

It is found in the cell inner membrane. Its function is as follows. Forms an efflux pump with AaeA. Could function as a metabolic relief valve, allowing to eliminate certain compounds when they accumulate to high levels in the cell. In Escherichia coli O157:H7, this protein is p-hydroxybenzoic acid efflux pump subunit AaeB.